A 115-amino-acid polypeptide reads, in one-letter code: Insulin (115 aa).

A signal peptide spans 1 to 22; the sequence is MAALWLQSVSLLVLMLVSWSGS. Disulfide bonds link Cys-32–Cys-101, Cys-44–Cys-114, and Cys-100–Cys-105. Residues 56 to 92 constitute a propeptide, c peptide; the sequence is DVDPLLGFLPAKSGGAAAGGENEVAEFAFKDQMEMMV.

The protein belongs to the insulin family. As to quaternary structure, heterodimer of a B chain and an A chain linked by two disulfide bonds.

It is found in the secreted. Its function is as follows. Insulin decreases blood glucose concentration. It increases cell permeability to monosaccharides, amino acids and fatty acids. It accelerates glycolysis, the pentose phosphate cycle, and glycogen synthesis in liver. The polypeptide is Insulin (ins) (Verasper moseri (Barfin flounder)).